The sequence spans 368 residues: Protein trichome birefringence-like 43 (368 aa).

Residues 9–25 traverse the membrane as a helical; Signal-anchor for type II membrane protein segment; that stretch reads GVVSVMVLMILVLLKQI. A GDS motif motif is present at residues 117–119; that stretch reads GDS. A DCXHWCLPGXXDXWN motif motif is present at residues 344-358; sequence DCSHWCLSGVPDSWN.

The protein belongs to the PC-esterase family. TBL subfamily.

Its subcellular location is the membrane. Functionally, may act as a bridging protein that binds pectin and other cell wall polysaccharides. Probably involved in maintaining esterification of pectins. May be involved in the specific O-acetylation of cell wall polymers. This chain is Protein trichome birefringence-like 43 (TBL43), found in Arabidopsis thaliana (Mouse-ear cress).